A 229-amino-acid polypeptide reads, in one-letter code: MPSKRFKQLPEKTKDLTADVIENLLATVKKNCTTKFDESIDLSFQVNNKQKKGEVNIRTVVNLPGGTGKKVKVAVVCEDTKAKEAKDAGADIVGSDEFIDKIKAGELNFEKLICTPGMMVKLSKLGKVLGPKGLMPNPKLGSVSEDIKQAVTNAKSGQAEIRNDKDGNIGVSIGKKSFHDDQLLKNFHAILDTLEKEKGNLTLKGDLIKNTFITSSMGVSYKVKLGKAI.

It belongs to the universal ribosomal protein uL1 family. Part of the 50S ribosomal subunit.

Its function is as follows. Binds directly to 23S rRNA. The L1 stalk is quite mobile in the ribosome, and is involved in E site tRNA release. In terms of biological role, protein L1 is also a translational repressor protein, it controls the translation of the L11 operon by binding to its mRNA. The polypeptide is Large ribosomal subunit protein uL1 (Pelagibacter ubique (strain HTCC1062)).